Reading from the N-terminus, the 188-residue chain is Mitochondrial import receptor subunit TOM20 homolog (188 aa).

Over 1–12 (MSDTILGFNKSN) the chain is Mitochondrial intermembrane. Residues 13–31 (VVLAAGIAGAAFLGYCIYF) form a helical membrane-spanning segment. Residues 32–188 (DHKRINAPDY…ELIDDTDDLE (157 aa)) are Cytoplasmic-facing. Disordered stretches follow at residues 42–73 (KDKI…AAPD) and 156–188 (DEAE…DDLE). Residues 58-67 (MAPRRPAAAG) are compositionally biased toward low complexity.

Belongs to the Tom20 family. Forms part of the preprotein translocase complex of the outer mitochondrial membrane (TOM complex).

Its subcellular location is the mitochondrion outer membrane. Its function is as follows. Central component of the receptor complex responsible for the recognition and translocation of cytosolically synthesized mitochondrial preproteins. Together with tomm-22 functions as the transit peptide receptor at the surface of the mitochondrion outer membrane and facilitates the movement of preproteins into the translocation pore. The protein is Mitochondrial import receptor subunit TOM20 homolog of Caenorhabditis elegans.